We begin with the raw amino-acid sequence, 289 residues long: N-methyltransferase FrzE (289 aa).

This sequence belongs to the methyltransferase superfamily.

The enzyme catalyses (1S,4S)-4-[(4-hydroxyphenyl)methyl]-2,5-diazaspiro[bicyclo[3.2.1]octane-6,1'-cyclohexan]-4'-one + S-adenosyl-L-methionine = (1S,4S)-4-[(4-hydroxyphenyl)methyl]-2-methyl-2,5-diazaspiro[bicyclo[3.2.1]octane-6,1'-cyclohexan]-4'-one + S-adenosyl-L-homocysteine + H(+). It carries out the reaction (1S,4S)-4-[(4-methoxyphenyl)methyl]-2,5-diazaspiro[bicyclo[3.2.1]octane-6,1'-cyclohexan]-4'-one + S-adenosyl-L-methionine = (1S,4S)-4-[(4-methoxyphenyl)methyl]-2-methyl-2,5-diazaspiro[bicyclo[3.2.1]octane-6,1'-cyclohexan]-4'-one + S-adenosyl-L-homocysteine + H(+). It participates in secondary metabolite biosynthesis. In terms of biological role, N-methyltransferase; part of the gene cluster that mediates the biosynthesis of the alkaloid (-)-FR901483, a potent immunosuppressant that shows efficacy in animal models and a probable inhibitor of purine nucleotide biosynthesis by targeting phosphoribosylpyrophosphate amidotransferase (PPAT). Within the pathway, FrzE methylates the amine at position C10'. The biosynthesis of (-)-FR901483 starts with the condensation of two L-tyrosines to yield (S,S)-dityrosyl-piperazine. This process occurs in 3 steps with the non-canonical nonribosomal peptide synthetase FrzA catalyzing the reduction of L-tyrosine into L-tyrosinal, the spontaneous condensation of 2 L-tyrosinal units, and the subsequent reduction by the NmrA-like family domain-containing oxidoreductase FrzB. The cytochrome P450 monooxygenase FrzC then performs coupling between N10 and C1' to morph the piperazine into a 1,4-diazabicyclo[3.2.1]octane spiro-fused to a 2,5-cyclohexadienone. The dienone portion is further reduced to cyclohexanone by the flavin-dependent reductase FrzD. The methyltranserases (MTs) FrzE and FrzF are then involved in the methylation at the C10' amine and the C4 phenolic oxygen, respectively. The order of the two MTs appear to be interchangeable. Cleavage of the C9-N10' bond by the dioxygenase FrzG then leads to formation of a conjugated iminium. In addition to the oxidation of C9, an additional dehydrogenation between C7 and C8 can occur to give a likely shunt product. The next biosynthetic step is the intramolecular aldol condensation catalyzed by the newly identified aldolase FrzH to yield an aza-tricyclic product with the formation of a C9-C3' bond. The short-chain dehydrogenase/reductase FrzI then produces dephospho-(-)-FR901483 that is phosphorylated at C4'-OH into (-)-FR901483 by the phosphotransferase FrzJ. In Cladobotryum sp, this protein is N-methyltransferase FrzE.